Reading from the N-terminus, the 601-residue chain is Elongation factor 4 (601 aa).

Residues 2-184 (DLIRNFSIIA…EMIARVPPPT (183 aa)) enclose the tr-type G domain. Residues 14 to 19 (DHGKST) and 131 to 134 (NKID) contribute to the GTP site.

Belongs to the TRAFAC class translation factor GTPase superfamily. Classic translation factor GTPase family. LepA subfamily.

Its subcellular location is the cell inner membrane. It catalyses the reaction GTP + H2O = GDP + phosphate + H(+). Functionally, required for accurate and efficient protein synthesis under certain stress conditions. May act as a fidelity factor of the translation reaction, by catalyzing a one-codon backward translocation of tRNAs on improperly translocated ribosomes. Back-translocation proceeds from a post-translocation (POST) complex to a pre-translocation (PRE) complex, thus giving elongation factor G a second chance to translocate the tRNAs correctly. Binds to ribosomes in a GTP-dependent manner. This chain is Elongation factor 4, found in Polynucleobacter asymbioticus (strain DSM 18221 / CIP 109841 / QLW-P1DMWA-1) (Polynucleobacter necessarius subsp. asymbioticus).